The sequence spans 136 residues: ATP synthase epsilon chain (136 aa).

The tract at residues 88–136 (DASSAESDLQAARNEVSKMEGQPASADKVKAQQSLDRARARVQAAKNQD) is disordered.

The protein belongs to the ATPase epsilon chain family. F-type ATPases have 2 components, CF(1) - the catalytic core - and CF(0) - the membrane proton channel. CF(1) has five subunits: alpha(3), beta(3), gamma(1), delta(1), epsilon(1). CF(0) has three main subunits: a, b and c.

Its subcellular location is the cellular thylakoid membrane. Functionally, produces ATP from ADP in the presence of a proton gradient across the membrane. The chain is ATP synthase epsilon chain from Synechococcus sp. (strain WH7803).